The primary structure comprises 705 residues: Elongation factor G (705 aa).

Residues H8 to A290 form the tr-type G domain. GTP contacts are provided by residues A17–T24, D88–H92, and N142–D145.

It belongs to the TRAFAC class translation factor GTPase superfamily. Classic translation factor GTPase family. EF-G/EF-2 subfamily.

It localises to the cytoplasm. Functionally, catalyzes the GTP-dependent ribosomal translocation step during translation elongation. During this step, the ribosome changes from the pre-translocational (PRE) to the post-translocational (POST) state as the newly formed A-site-bound peptidyl-tRNA and P-site-bound deacylated tRNA move to the P and E sites, respectively. Catalyzes the coordinated movement of the two tRNA molecules, the mRNA and conformational changes in the ribosome. This is Elongation factor G from Xylella fastidiosa (strain M12).